The chain runs to 221 residues: Growth hormone-releasing peptides (221 aa).

Positions M1–F25 are cleaved as a signal peptide. The propeptide occupies A26–R95. F107 carries the phenylalanine amide modification. A propeptide spanning residues T110–K127 is cleaved from the precursor. Phenylalanine amide occurs at positions 136, 156, and 176. Positions T179–M221 are excised as a propeptide.

The protein belongs to the FARP (FMRFamide related peptide) family. Observed in the suprachiasmatic nucleus and in several telencephalic and diencephalic regions.

It localises to the secreted. Functionally, primary role is to release GH from the pituitary. May act as an endogenous ligand in the bullfrog hypothalamo-hypophysial system. This is Growth hormone-releasing peptides from Aquarana catesbeiana (American bullfrog).